A 426-amino-acid polypeptide reads, in one-letter code: Tyrosine--tRNA ligase (426 aa).

Tyr38 serves as a coordination point for L-tyrosine. The 'HIGH' region signature appears at 43–52; the sequence is PTADSLHIGS. L-tyrosine is bound by residues Tyr176 and Gln180. Positions 236–240 match the 'KMSKS' region motif; that stretch reads KFGKT. Lys239 contacts ATP. In terms of domain architecture, S4 RNA-binding spans 359–426; that stretch reads QTIVEVLTQS…KKLFNLYIWK (68 aa).

The protein belongs to the class-I aminoacyl-tRNA synthetase family. TyrS type 1 subfamily. In terms of assembly, homodimer.

It localises to the cytoplasm. It catalyses the reaction tRNA(Tyr) + L-tyrosine + ATP = L-tyrosyl-tRNA(Tyr) + AMP + diphosphate + H(+). Functionally, catalyzes the attachment of tyrosine to tRNA(Tyr) in a two-step reaction: tyrosine is first activated by ATP to form Tyr-AMP and then transferred to the acceptor end of tRNA(Tyr). The polypeptide is Tyrosine--tRNA ligase (Aliivibrio fischeri (strain ATCC 700601 / ES114) (Vibrio fischeri)).